Here is an 87-residue protein sequence, read N- to C-terminus: Beta-mammal toxin Css4 (87 aa).

Residues 1-19 (MNSLLMITACLALVGTVWA) form the signal peptide. An LCN-type CS-alpha/beta domain is found at 20–85 (KEGYLVNSYT…VWPLPNKTCN (66 aa)). 4 disulfides stabilise this stretch: Cys31/Cys84, Cys35/Cys60, Cys44/Cys65, and Cys48/Cys67. Asn85 carries the post-translational modification Asparagine amide.

It belongs to the long (4 C-C) scorpion toxin superfamily. Sodium channel inhibitor family. Beta subfamily. As to expression, expressed by the venom gland.

It localises to the secreted. Beta toxins bind voltage-independently at site-4 of sodium channels (Nav) and shift the voltage of activation toward more negative potentials thereby affecting sodium channel activation and promoting spontaneous and repetitive firing. This toxin is active only on mammals. This chain is Beta-mammal toxin Css4, found in Centruroides suffusus (Durango bark scorpion).